Here is a 242-residue protein sequence, read N- to C-terminus: UPF0246 protein SPH_1662 (242 aa).

The protein belongs to the UPF0246 family.

This chain is UPF0246 protein SPH_1662, found in Streptococcus pneumoniae (strain Hungary19A-6).